A 466-amino-acid chain; its full sequence is Cysteine--tRNA ligase (466 aa).

Cys-30 is a Zn(2+) binding site. The 'HIGH' region signature appears at 32–42; that stretch reads PTVYNYIHIGN. Cys-210, His-235, and Glu-239 together coordinate Zn(2+). Residues 267-271 carry the 'KMSKS' region motif; sequence KMSKS. Position 270 (Lys-270) interacts with ATP. A Phosphoserine modification is found at Ser-271.

This sequence belongs to the class-I aminoacyl-tRNA synthetase family. In terms of assembly, monomer. The cofactor is Zn(2+).

Its subcellular location is the cytoplasm. It catalyses the reaction tRNA(Cys) + L-cysteine + ATP = L-cysteinyl-tRNA(Cys) + AMP + diphosphate. This is Cysteine--tRNA ligase from Geobacillus sp. (strain WCH70).